The primary structure comprises 434 residues: Putative nuclease OPG089 (434 aa).

Mg(2+) is bound by residues Asp33, Asp74, Glu168, Asp170, Asp196, and Asp198.

This sequence belongs to the XPG/RAD2 endonuclease family. FEN1 subfamily. The cofactor is Mg(2+).

The protein resides in the virion. In terms of biological role, putative nuclease that seems to be required for double-strand break repair, homologous recombination, and production of full-length viral genomic DNA. The protein is Putative nuclease OPG089 (OPG089) of Vaccinia virus (strain Copenhagen) (VACV).